The primary structure comprises 523 residues: Cytochrome P450 monooxygenase ple1 (523 aa).

Residues 9–29 form a helical membrane-spanning segment; sequence ALPVLAIWAAIGLAYWIDSQK. The N-linked (GlcNAc...) asparagine glycan is linked to asparagine 141. A heme-binding site is contributed by cysteine 444.

The protein belongs to the cytochrome P450 family. Requires heme as cofactor.

Its subcellular location is the membrane. It participates in secondary metabolite biosynthesis; terpenoid biosynthesis. Cytochrome P450 monooxygenase; part of the gene cluster that mediates the biosynthesis of pleuromutilin, a tricyclic diterpene showing antibacterial properties. The geranylgeranyl diphosphate (GGPP) synthase ple4 catalyzes the first step in pleuromutilin biosynthesis. GGPP is then substrate of the premutilin synthase (PS) ple3 to yield premutilin. Premutilin synthase is a bifunctional enzyme composed of the fusion of a class II diterpene cyclase (DTC) and a class I diterpene synthase (DTS), with the corresponding domains and active sites containing characteristic aspartate-rich motifs. GGPP is first converted to mutildienyl-diphosphate (MPP) at the class II DTC site. MPP is subsequently further cyclized at the class I DTS site, followed by a 1,5-hydride shift and addition of water prior to terminating deprotonation, to yield premutilin. The cytochrome P450 monooxygenases ple5 and ple6 hydroxylate premutilin at C-11 and C-3, respectively, producing 11-hydroxypremutilin and 3-hydroxypremutilin. The combination of the actions of both ple5 and ple6 leads to the production of 3,11-dihydroxypremutilin. The short chain dehydrogenase ple7 further converts 3,11-dihydroxypremutilin into mutilin. The acetyltransferase ple2 then acetylates mutilin to produce 14-O-acetylmutilin. Finally, the cytochrome P450 monooxygenase ple1 catalyzes hydroxylation on the alpha position of the acetyl side chain of 14-O-acetylmutilin to yield pleuromutilin. This is Cytochrome P450 monooxygenase ple1 from Rhodocybe pseudopiperita (Clitopilus pseudopiperitus).